The sequence spans 90 residues: ATP synthase subunit c (90 aa).

Transmembrane regions (helical) follow at residues 17–37 (PLAYGLTMVAAGLAIMGAGVV) and 70–90 (LAIVETASIYCFIIALLIIFV).

The protein belongs to the ATPase C chain family. In terms of assembly, F-type ATPases have 2 components, F(1) - the catalytic core - and F(0) - the membrane proton channel. F(1) has five subunits: alpha(3), beta(3), gamma(1), delta(1), epsilon(1). F(0) has three main subunits: a(1), b(2) and c(10-14). The alpha and beta chains form an alternating ring which encloses part of the gamma chain. F(1) is attached to F(0) by a central stalk formed by the gamma and epsilon chains, while a peripheral stalk is formed by the delta and b chains.

The protein resides in the cell membrane. Functionally, f(1)F(0) ATP synthase produces ATP from ADP in the presence of a proton or sodium gradient. F-type ATPases consist of two structural domains, F(1) containing the extramembraneous catalytic core and F(0) containing the membrane proton channel, linked together by a central stalk and a peripheral stalk. During catalysis, ATP synthesis in the catalytic domain of F(1) is coupled via a rotary mechanism of the central stalk subunits to proton translocation. Key component of the F(0) channel; it plays a direct role in translocation across the membrane. A homomeric c-ring of between 10-14 subunits forms the central stalk rotor element with the F(1) delta and epsilon subunits. This Metamycoplasma arthritidis (strain 158L3-1) (Mycoplasma arthritidis) protein is ATP synthase subunit c.